Here is a 380-residue protein sequence, read N- to C-terminus: Cytochrome b (380 aa).

The next 4 helical transmembrane spans lie at 34-54 (FGSL…FLAM), 78-99 (WLLR…YFHI), 114-134 (WNIG…GYVL), and 179-199 (FFTF…IHLL). Heme b contacts are provided by His-84 and His-98. His-197 contributes to the heme b binding site. His-202 contacts a ubiquinone. 4 consecutive transmembrane segments (helical) span residues 227–247 (FKDL…STFA), 289–309 (LGGV…PITH), 321–341 (TAKA…WIGG), and 348–368 (FISI…LIIP).

It belongs to the cytochrome b family. The cytochrome bc1 complex contains 3 respiratory subunits (MT-CYB, CYC1 and UQCRFS1), 2 core proteins (UQCRC1 and UQCRC2) and probably 6 low-molecular weight proteins. Requires heme b as cofactor.

Its subcellular location is the mitochondrion inner membrane. In terms of biological role, component of the ubiquinol-cytochrome c reductase complex (complex III or cytochrome b-c1 complex) that is part of the mitochondrial respiratory chain. The b-c1 complex mediates electron transfer from ubiquinol to cytochrome c. Contributes to the generation of a proton gradient across the mitochondrial membrane that is then used for ATP synthesis. This chain is Cytochrome b (mt-cyb), found in Glandirana rugosa (Japanese wrinkled frog).